The following is a 166-amino-acid chain: Phosphopantetheine adenylyltransferase (166 aa).

Serine 11 contributes to the substrate binding site. Residues 11-12 (SF) and histidine 19 each bind ATP. Lysine 43, alanine 76, and arginine 90 together coordinate substrate. ATP-binding positions include 91–93 (GLR), glutamate 101, and 126–132 (LQPISSS).

Belongs to the bacterial CoaD family. In terms of assembly, homohexamer. It depends on Mg(2+) as a cofactor.

It is found in the cytoplasm. The catalysed reaction is (R)-4'-phosphopantetheine + ATP + H(+) = 3'-dephospho-CoA + diphosphate. Its pathway is cofactor biosynthesis; coenzyme A biosynthesis; CoA from (R)-pantothenate: step 4/5. Its function is as follows. Reversibly transfers an adenylyl group from ATP to 4'-phosphopantetheine, yielding dephospho-CoA (dPCoA) and pyrophosphate. This Streptococcus equi subsp. zooepidemicus (strain MGCS10565) protein is Phosphopantetheine adenylyltransferase.